We begin with the raw amino-acid sequence, 260 residues long: Aspartate/glutamate leucyltransferase (260 aa).

Positions 241 to 251 (DRLPEEGDRGP) are enriched in basic and acidic residues. The interval 241-260 (DRLPEEGDRGPARFPASLTE) is disordered.

This sequence belongs to the R-transferase family. Bpt subfamily.

The protein resides in the cytoplasm. It catalyses the reaction N-terminal L-glutamyl-[protein] + L-leucyl-tRNA(Leu) = N-terminal L-leucyl-L-glutamyl-[protein] + tRNA(Leu) + H(+). The enzyme catalyses N-terminal L-aspartyl-[protein] + L-leucyl-tRNA(Leu) = N-terminal L-leucyl-L-aspartyl-[protein] + tRNA(Leu) + H(+). In terms of biological role, functions in the N-end rule pathway of protein degradation where it conjugates Leu from its aminoacyl-tRNA to the N-termini of proteins containing an N-terminal aspartate or glutamate. The sequence is that of Aspartate/glutamate leucyltransferase from Gluconacetobacter diazotrophicus (strain ATCC 49037 / DSM 5601 / CCUG 37298 / CIP 103539 / LMG 7603 / PAl5).